A 297-amino-acid polypeptide reads, in one-letter code: Ribosomal protein L11 methyltransferase (297 aa).

Residues Thr152, Gly173, Asp195, and Asn234 each contribute to the S-adenosyl-L-methionine site.

Belongs to the methyltransferase superfamily. PrmA family.

The protein localises to the cytoplasm. It catalyses the reaction L-lysyl-[protein] + 3 S-adenosyl-L-methionine = N(6),N(6),N(6)-trimethyl-L-lysyl-[protein] + 3 S-adenosyl-L-homocysteine + 3 H(+). In terms of biological role, methylates ribosomal protein L11. In Cupriavidus taiwanensis (strain DSM 17343 / BCRC 17206 / CCUG 44338 / CIP 107171 / LMG 19424 / R1) (Ralstonia taiwanensis (strain LMG 19424)), this protein is Ribosomal protein L11 methyltransferase.